Reading from the N-terminus, the 350-residue chain is Selenide, water dikinase (350 aa).

C17 is a catalytic residue. ATP contacts are provided by residues K20 and 48–50 (LFD). Residue D51 participates in Mg(2+) binding. ATP-binding positions include D68, D91, and 139–141 (GHS). Residue D91 participates in Mg(2+) binding. D229 contributes to the Mg(2+) binding site.

Belongs to the selenophosphate synthase 1 family. Class I subfamily. As to quaternary structure, homodimer. Requires Mg(2+) as cofactor.

It carries out the reaction hydrogenselenide + ATP + H2O = selenophosphate + AMP + phosphate + 2 H(+). Functionally, synthesizes selenophosphate from selenide and ATP. The sequence is that of Selenide, water dikinase from Bdellovibrio bacteriovorus (strain ATCC 15356 / DSM 50701 / NCIMB 9529 / HD100).